A 462-amino-acid chain; its full sequence is Cleavage and polyadenylation specificity factor subunit 7 (462 aa).

2 disordered regions span residues 34–68 (VLTA…NKTP) and 161–213 (TRQN…PSVL). Positions 50 to 62 (EPPPPVRQEPAPK) are enriched in pro residues. Positions 82-162 (AAVYVGSFSW…EKVDVRPATR (81 aa)) constitute an RRM domain. A compositionally biased stretch (basic and acidic residues) spans 181–190 (HSRDSSDSAD). T194 is subject to Phosphothreonine. S196 is subject to Phosphoserine. Residue K345 forms a Glycyl lysine isopeptide (Lys-Gly) (interchain with G-Cter in SUMO2) linkage. Positions 400–462 (SVGASGSSSR…HRDRERDRHH (63 aa)) are disordered. S404 and S414 each carry phosphoserine. Residues 409–460 (RKRHRSRERSPSRSRESSRRHRDLLHNEDRHDDYFQERNREHERHRDRERDR) are arg/Ser-rich domain. Basic and acidic residues-rich tracts occupy residues 416-425 (ERSPSRSRES) and 432-462 (LLHN…DRHH).

It belongs to the RRM CPSF6/7 family. Component of the cleavage factor Im (CFIm) complex which is a heterotetramer composed of two subunits of NUDT21/CPSF5 and two subunits of CPSF6 or CPSF7 or a heterodimer of CPSF6 and CPSF7. The cleavage factor Im (CFIm) complex associates with the CPSF and CSTF complexes to promote the assembly of the core mRNA 3'-processing machinery. Interacts with NUDT21/CPSF5. Interacts (via Arg/Ser-rich domain) with FIP1L1 (preferentially via unphosphorylated form and Arg/Glu/Asp-rich region); this interaction mediates, at least in part, the interaction between the CFIm and CPSF complexes and may be inhibited by CPSF7 hyper-phosphorylation. In terms of processing, phosphorylated. Asymmetrically dimethylated on arginine residues by PRMT1.

The protein localises to the nucleus. The protein resides in the cytoplasm. Component of the cleavage factor Im (CFIm) complex that functions as an activator of the pre-mRNA 3'-end cleavage and polyadenylation processing required for the maturation of pre-mRNA into functional mRNAs. CFIm contributes to the recruitment of multiprotein complexes on specific sequences on the pre-mRNA 3'-end, so called cleavage and polyadenylation signals (pA signals). Most pre-mRNAs contain multiple pA signals, resulting in alternative cleavage and polyadenylation (APA) producing mRNAs with variable 3'-end formation. The CFIm complex acts as a key regulator of cleavage and polyadenylation site choice during APA through its binding to 5'-UGUA-3' elements localized in the 3'-untranslated region (UTR) for a huge number of pre-mRNAs. CPSF7 activates directly the mRNA 3'-processing machinery. Binds to pA signals in RNA substrates. The chain is Cleavage and polyadenylation specificity factor subunit 7 from Rattus norvegicus (Rat).